A 191-amino-acid chain; its full sequence is MVVLGVDPGSRLTGYGVIRQEGTFFTVLSCGVIRLHPRSSHAERIGQIYRELEAVITDYAPECVALETVFLSRNVQSALKLGQVRGAVIALAMNRNLLLHEYAPREVKSAVTGKGAASKEQVAFMVARMLALNPVPEPFDVTDALGIALCDLLRGGSREPFKSAGQSRKGGMSWSQFVGASPDMVIRLFQK.

Residues Asp-7, Glu-67, and Asp-140 contribute to the active site. 3 residues coordinate Mg(2+): Asp-7, Glu-67, and Asp-140.

It belongs to the RuvC family. In terms of assembly, homodimer which binds Holliday junction (HJ) DNA. The HJ becomes 2-fold symmetrical on binding to RuvC with unstacked arms; it has a different conformation from HJ DNA in complex with RuvA. In the full resolvosome a probable DNA-RuvA(4)-RuvB(12)-RuvC(2) complex forms which resolves the HJ. The cofactor is Mg(2+).

The protein resides in the cytoplasm. The enzyme catalyses Endonucleolytic cleavage at a junction such as a reciprocal single-stranded crossover between two homologous DNA duplexes (Holliday junction).. The RuvA-RuvB-RuvC complex processes Holliday junction (HJ) DNA during genetic recombination and DNA repair. Endonuclease that resolves HJ intermediates. Cleaves cruciform DNA by making single-stranded nicks across the HJ at symmetrical positions within the homologous arms, yielding a 5'-phosphate and a 3'-hydroxyl group; requires a central core of homology in the junction. The consensus cleavage sequence is 5'-(A/T)TT(C/G)-3'. Cleavage occurs on the 3'-side of the TT dinucleotide at the point of strand exchange. HJ branch migration catalyzed by RuvA-RuvB allows RuvC to scan DNA until it finds its consensus sequence, where it cleaves and resolves the cruciform DNA. The chain is Crossover junction endodeoxyribonuclease RuvC from Pelodictyon phaeoclathratiforme (strain DSM 5477 / BU-1).